The primary structure comprises 201 residues: Recombination protein RecR (201 aa).

A C4-type zinc finger spans residues 60–75 (CKTCGNIDTQNPCTVC). One can recognise a Toprim domain in the interval 83 to 178 (SIIVVVADVA…KVTRLAHGVP (96 aa)).

The protein belongs to the RecR family.

Its function is as follows. May play a role in DNA repair. It seems to be involved in an RecBC-independent recombinational process of DNA repair. It may act with RecF and RecO. This Rhodopseudomonas palustris (strain HaA2) protein is Recombination protein RecR.